The primary structure comprises 179 residues: Large ribosomal subunit protein uL5c (179 aa).

This sequence belongs to the universal ribosomal protein uL5 family. In terms of assembly, part of the 50S ribosomal subunit; contacts the 5S rRNA.

Its subcellular location is the plastid. Functionally, binds 5S rRNA, forms part of the central protuberance of the 50S subunit. This chain is Large ribosomal subunit protein uL5c (rpl5), found in Euglena longa (Euglenophycean alga).